Reading from the N-terminus, the 382-residue chain is Tuliposide A-converting enzyme 2, chloroplastic (382 aa).

Residues 1–74 constitute a chloroplast transit peptide; sequence MSVASFFSSL…PSPSLSPTPT (74 aa). S232 (acyl-ester intermediate) is an active-site residue. Residues D324 and H356 each act as charge relay system in the active site.

This sequence belongs to the AB hydrolase superfamily. As to quaternary structure, homodimer. Expressed in roots, stems, leaves, petals, stamens and pistils, but not in bulb scales.

It localises to the plastid. The protein resides in the chloroplast. It catalyses the reaction 6-tuliposide A = tulipalin A + D-glucose. With respect to regulation, inhibited by NaF, AgNO(3), HgCl(2), CuSO(4) and phenylmethylsulfonyl fluoride (PMSF). Functionally, lactone-forming carboxylesterases, specifically catalyzing intramolecular transesterification, but not hydrolysis. Involved in the biosynthesis of tulipalins, defensive chemicals that show antimicrobial activities against a broad range of strains of bacteria and fungi. Substrates are 6-tuliposide A &gt; 6-tuliposide B. The sequence is that of Tuliposide A-converting enzyme 2, chloroplastic (TCEA2) from Tulipa gesneriana (Garden tulip).